We begin with the raw amino-acid sequence, 561 residues long: Type 2 DNA topoisomerase 6 subunit B (561 aa).

Residues Asn-46, Asp-78, 99 to 100 (TK), 109 to 116 (GQQGIGIS), and Lys-471 each bind ATP.

It belongs to the TOP6B family. Homodimer. Heterotetramer of two Top6A and two Top6B chains.

The catalysed reaction is ATP-dependent breakage, passage and rejoining of double-stranded DNA.. In terms of biological role, relaxes both positive and negative superturns and exhibits a strong decatenase activity. The chain is Type 2 DNA topoisomerase 6 subunit B from Thermococcus gammatolerans (strain DSM 15229 / JCM 11827 / EJ3).